A 182-amino-acid polypeptide reads, in one-letter code: ATP-dependent protease subunit HslV (182 aa).

Thr6 is an active-site residue. Residues Ala164, Cys167, and Thr170 each coordinate Na(+).

Belongs to the peptidase T1B family. HslV subfamily. In terms of assembly, a double ring-shaped homohexamer of HslV is capped on each side by a ring-shaped HslU homohexamer. The assembly of the HslU/HslV complex is dependent on binding of ATP.

The protein localises to the cytoplasm. The catalysed reaction is ATP-dependent cleavage of peptide bonds with broad specificity.. Allosterically activated by HslU binding. Its function is as follows. Protease subunit of a proteasome-like degradation complex believed to be a general protein degrading machinery. The sequence is that of ATP-dependent protease subunit HslV from Borreliella burgdorferi (strain ATCC 35210 / DSM 4680 / CIP 102532 / B31) (Borrelia burgdorferi).